The chain runs to 161 residues: NADH-quinone oxidoreductase subunit I (161 aa).

4Fe-4S ferredoxin-type domains follow at residues 52–82 (LRRY…IESS) and 92–121 (TRYD…QGPN). Residues cysteine 62, cysteine 65, cysteine 68, cysteine 72, cysteine 101, cysteine 104, cysteine 107, and cysteine 111 each contribute to the [4Fe-4S] cluster site.

Belongs to the complex I 23 kDa subunit family. In terms of assembly, NDH-1 is composed of 14 different subunits. Subunits NuoA, H, J, K, L, M, N constitute the membrane sector of the complex. [4Fe-4S] cluster is required as a cofactor.

It localises to the cell inner membrane. It carries out the reaction a quinone + NADH + 5 H(+)(in) = a quinol + NAD(+) + 4 H(+)(out). Its function is as follows. NDH-1 shuttles electrons from NADH, via FMN and iron-sulfur (Fe-S) centers, to quinones in the respiratory chain. The immediate electron acceptor for the enzyme in this species is believed to be ubiquinone. Couples the redox reaction to proton translocation (for every two electrons transferred, four hydrogen ions are translocated across the cytoplasmic membrane), and thus conserves the redox energy in a proton gradient. The protein is NADH-quinone oxidoreductase subunit I of Pelagibacter ubique (strain HTCC1062).